The primary structure comprises 312 residues: MNILTDPAKLKTAGCADTNASKCSEGDGEGSVQVQLDPNLKIGTAKVFSIYGKGGIGKSTTSSNLSVAFSKLGKRVLQIGCDPKHDSTFTLTKRLVPTVIDVLESVNFHSEELRPEDFVFEGYNGVMCLEAGGPPAGTGCGGYVVGQTVKLLKEHHLLEDTDVVIFDVLGDVVCGGFAAPLQHSERAMIVAANDFDSIFAANRIAAAIAAKSKNYGVRLGGIIANRSRETDQIDKFGERTGIRRIAHLPDLDVIRKSRLKKMTLFEMDHTDEILAVQQEYLRLATEMLEGKEPPIDGKPLKDRDIFDLLGFD.

ATP-binding positions include 55–60 and Lys84; that span reads GIGKST. Residue Ser59 coordinates Mg(2+). [4Fe-4S] cluster-binding residues include Cys140 and Cys174. Residues 225–226 and 249–251 each bind ATP; these read NR and PDL.

It belongs to the NifH/BchL/ChlL family. As to quaternary structure, homodimer. Protochlorophyllide reductase is composed of three subunits; BchL, BchN and BchB. It depends on [4Fe-4S] cluster as a cofactor.

It catalyses the reaction chlorophyllide a + oxidized 2[4Fe-4S]-[ferredoxin] + 2 ADP + 2 phosphate = protochlorophyllide a + reduced 2[4Fe-4S]-[ferredoxin] + 2 ATP + 2 H2O. Its pathway is porphyrin-containing compound metabolism; bacteriochlorophyll biosynthesis (light-independent). Component of the dark-operative protochlorophyllide reductase (DPOR) that uses Mg-ATP and reduced ferredoxin to reduce ring D of protochlorophyllide (Pchlide) to form chlorophyllide a (Chlide). This reaction is light-independent. The L component serves as a unique electron donor to the NB-component of the complex, and binds Mg-ATP. The chain is Light-independent protochlorophyllide reductase iron-sulfur ATP-binding protein from Rhodopseudomonas palustris (strain BisB18).